The sequence spans 207 residues: N-(5'-phosphoribosyl)anthranilate isomerase (207 aa).

It belongs to the TrpF family.

The catalysed reaction is N-(5-phospho-beta-D-ribosyl)anthranilate = 1-(2-carboxyphenylamino)-1-deoxy-D-ribulose 5-phosphate. Its pathway is amino-acid biosynthesis; L-tryptophan biosynthesis; L-tryptophan from chorismate: step 3/5. The sequence is that of N-(5'-phosphoribosyl)anthranilate isomerase from Halorhodospira halophila (strain DSM 244 / SL1) (Ectothiorhodospira halophila (strain DSM 244 / SL1)).